Here is a 407-residue protein sequence, read N- to C-terminus: Argininosuccinate synthase (407 aa).

ATP is bound by residues Ala12 to Ser20 and Ala39. Positions 90 and 95 each coordinate L-citrulline. Residue Gly120 coordinates ATP. Residues Thr122, Asn126, and Asp127 each coordinate L-aspartate. Asn126 contributes to the L-citrulline binding site. Positions 130, 181, 190, 266, and 278 each coordinate L-citrulline.

It belongs to the argininosuccinate synthase family. Type 1 subfamily. In terms of assembly, homotetramer.

It is found in the cytoplasm. The catalysed reaction is L-citrulline + L-aspartate + ATP = 2-(N(omega)-L-arginino)succinate + AMP + diphosphate + H(+). It participates in amino-acid biosynthesis; L-arginine biosynthesis; L-arginine from L-ornithine and carbamoyl phosphate: step 2/3. This Nitrosospira multiformis (strain ATCC 25196 / NCIMB 11849 / C 71) protein is Argininosuccinate synthase.